Reading from the N-terminus, the 325-residue chain is Inactive S-adenosylmethionine decarboxylase prozyme (325 aa).

Belongs to the eukaryotic AdoMetDC family. As to quaternary structure, forms a heterodimer with S-adenosylmethionine decarboxylase AdoMetDC; heterodimerization is required to activate AdoMetDC.

Its pathway is amine and polyamine biosynthesis; S-adenosylmethioninamine biosynthesis; S-adenosylmethioninamine from S-adenosyl-L-methionine: step 1/1. In terms of biological role, probably has no catalytic activity due to the loss of several residues required for processing and catalysis. Forms a complex with S-adenosylmethionine decarboxylase AdoMetDC which is essential to activate AdoMetDC. Required for the biosynthesis of the polyamine spermidine. Required for growth and survival during the bloodstream life cycle stage. This is Inactive S-adenosylmethionine decarboxylase prozyme from Trypanosoma brucei brucei.